Consider the following 109-residue polypeptide: Ig kappa chain V region S211 (109 aa).

Residues 1–23 (DVQMTQSPSYLAASPGESVSISC) are framework-1. A complementarity-determining-1 region spans residues 24–35 (KASNKSISNNLA). The interval 36 to 50 (WYZZKPGKANKLLIS) is framework-2. The interval 51-57 (SGSTLQS) is complementarity-determining-2. The tract at residues 58 to 89 (GTPSRFSGSGSDTDFTLTIRSLEFQDFAVYYC) is framework-3. Positions 90-98 (ZZYNEPYYT) are complementarity-determining-3. The framework-4 stretch occupies residues 99–108 (FGAGTMLELK).

This Rattus norvegicus (Rat) protein is Ig kappa chain V region S211.